Here is a 1328-residue protein sequence, read N- to C-terminus: 5'-3' exoribonuclease 1 (1328 aa).

The interval 1211-1328 (AGKNRKTNVS…VQPMGKLQIN (118 aa)) is disordered. Polar residues predominate over residues 1217-1231 (TNVSANNVSQGTDSR). Residues 1275 to 1286 (HKSKSKFSKGNH) are compositionally biased toward basic residues.

The protein belongs to the 5'-3' exonuclease family. In terms of assembly, monomer. Mg(2+) serves as cofactor.

The protein localises to the cytoplasm. The protein resides in the perinuclear region. It localises to the P-body. Strand exchange activity is enhanced by fatty acid synthase (stimulatory factor P190/210). Multifunctional protein that exhibits several independent functions at different levels of the cellular processes. 5'-3' exonuclease component of the nonsense-mediated mRNA decay (NMD) which is a highly conserved mRNA degradation pathway, an RNA surveillance system whose role is to identify and rid cells of mRNA with premature termination codons and thus prevents accumulation of potentially harmful truncated proteins. Involved in the degradation of several hypomodified mature tRNA species and participates in the 5'-processing or the degradation of the snoRNA precursors and rRNA processing. This chain is 5'-3' exoribonuclease 1 (exo2), found in Schizosaccharomyces pombe (strain 972 / ATCC 24843) (Fission yeast).